The sequence spans 373 residues: Chaperone protein DnaJ (373 aa).

Residues 5–70 (CYYEVLEVSR…EKRSRYDRFG (66 aa)) form the J domain. A CR-type zinc finger spans residues 134–212 (GTEVELNIPV…CRGAGYVRKQ (79 aa)). The Zn(2+) site is built by Cys147, Cys150, Cys164, Cys167, Cys186, Cys189, Cys200, and Cys203. 4 CXXCXGXG motif repeats span residues 147 to 154 (CDTCEGSG), 164 to 171 (CSHCGGRG), 186 to 193 (CPACNGRG), and 200 to 207 (CSECRGAG).

The protein belongs to the DnaJ family. In terms of assembly, homodimer. It depends on Zn(2+) as a cofactor.

It localises to the cytoplasm. Its function is as follows. Participates actively in the response to hyperosmotic and heat shock by preventing the aggregation of stress-denatured proteins and by disaggregating proteins, also in an autonomous, DnaK-independent fashion. Unfolded proteins bind initially to DnaJ; upon interaction with the DnaJ-bound protein, DnaK hydrolyzes its bound ATP, resulting in the formation of a stable complex. GrpE releases ADP from DnaK; ATP binding to DnaK triggers the release of the substrate protein, thus completing the reaction cycle. Several rounds of ATP-dependent interactions between DnaJ, DnaK and GrpE are required for fully efficient folding. Also involved, together with DnaK and GrpE, in the DNA replication of plasmids through activation of initiation proteins. The polypeptide is Chaperone protein DnaJ (Maridesulfovibrio salexigens (strain ATCC 14822 / DSM 2638 / NCIMB 8403 / VKM B-1763) (Desulfovibrio salexigens)).